A 119-amino-acid chain; its full sequence is Aspartate 1-decarboxylase (119 aa).

The active-site Schiff-base intermediate with substrate; via pyruvic acid is Ser25. Ser25 carries the post-translational modification Pyruvic acid (Ser). Residue Thr57 coordinates substrate. The active-site Proton donor is the Tyr58. 73–75 (GAA) is a binding site for substrate.

It belongs to the PanD family. As to quaternary structure, heterooctamer of four alpha and four beta subunits. Pyruvate is required as a cofactor. Post-translationally, is synthesized initially as an inactive proenzyme, which is activated by self-cleavage at a specific serine bond to produce a beta-subunit with a hydroxyl group at its C-terminus and an alpha-subunit with a pyruvoyl group at its N-terminus.

The protein resides in the cytoplasm. It catalyses the reaction L-aspartate + H(+) = beta-alanine + CO2. It participates in cofactor biosynthesis; (R)-pantothenate biosynthesis; beta-alanine from L-aspartate: step 1/1. Its function is as follows. Catalyzes the pyruvoyl-dependent decarboxylation of aspartate to produce beta-alanine. This Ruthia magnifica subsp. Calyptogena magnifica protein is Aspartate 1-decarboxylase.